Consider the following 147-residue polypeptide: Myoglobin (147 aa).

A Globin domain is found at 2 to 141 (ADFDMVLKCW…IIADMEADYK (140 aa)). His60 is a nitrite binding site. His60 is a binding site for O2. Heme b is bound at residue His89.

Belongs to the globin family. In terms of assembly, monomeric.

It is found in the cytoplasm. Its subcellular location is the sarcoplasm. The catalysed reaction is Fe(III)-heme b-[protein] + nitric oxide + H2O = Fe(II)-heme b-[protein] + nitrite + 2 H(+). The enzyme catalyses H2O2 + AH2 = A + 2 H2O. Its function is as follows. Monomeric heme protein which primary function is to store oxygen and facilitate its diffusion within muscle tissues. Reversibly binds oxygen through a pentacoordinated heme iron and enables its timely and efficient release as needed during periods of heightened demand. Depending on the oxidative conditions of tissues and cells, and in addition to its ability to bind oxygen, it also has a nitrite reductase activity whereby it regulates the production of bioactive nitric oxide. Under stress conditions, like hypoxia and anoxia, it also protects cells against reactive oxygen species thanks to its pseudoperoxidase activity. The sequence is that of Myoglobin (mb) from Notothenia neglecta (Yellowbelly rockcod).